The following is a 464-amino-acid chain: FERM domain-containing protein 8 (464 aa).

Met-1 is subject to N-acetylmethionine. Residues 1 to 22 (MDGTEGSAGQPGPAERSHRSSV) are disordered. At Ser-24 the chain carries Phosphoserine. In terms of domain architecture, FERM spans 30-376 (ADVLVYLADD…YCIELSQAAE (347 aa)). The interval 376-408 (EPAGPQDSATGSPSDPSSSLAPVQRPKLRRQGS) is disordered. Ser-383, Ser-387, and Ser-408 each carry phosphoserine. Thr-419 carries the phosphothreonine modification. Residues Ser-439 and Ser-446 each carry the phosphoserine modification.

As to quaternary structure, interacts with iRhom1/RHBDF1 and iRhom2/RHBDF2 (via cytoplasmic N-termini); this interaction leads to mutual protein stabilization. Interacts with ADAM17; this interaction is indirect and mediated by iRhom proteins. Interacts with LRP6; this interaction affects LRP6-binding to AXIN1. In terms of tissue distribution, widely expressed, with high expression in heart and spleen.

It is found in the cytoplasm. The protein resides in the cytosol. Its subcellular location is the cell membrane. Its function is as follows. Promotes the cell surface stability of iRhom1/RHBDF1 and iRhom2/RHBDF2 and prevents their degradation via the endolysosomal pathway. By acting on iRhoms, involved in ADAM17-mediated shedding of TNF, amphiregulin/AREG, HBEGF and TGFA from the cell surface. Negatively regulates Wnt signaling, possibly by antagonizing the recruitment of AXIN1 to LRP6. In Homo sapiens (Human), this protein is FERM domain-containing protein 8 (FRMD8).